Consider the following 554-residue polypeptide: Acurin A biosynthesis cluster MFS-type transporter (554 aa).

A run of 5 helical transmembrane segments spans residues 24 to 44 (WLIF…TSII), 60 to 80 (LYIW…AIVG), 96 to 116 (LLIF…GMLL), 123 to 143 (GLGG…MVSL), and 151 to 171 (GILG…GGGF). The N-linked (GlcNAc...) asparagine glycan is linked to Asn-174. Helical transmembrane passes span 179-199 (WIFY…VTLL), 219-239 (WGGI…LTWA), and 251-271 (IVPL…EALP). The N-linked (GlcNAc...) asparagine glycan is linked to Asn-283. Transmembrane regions (helical) follow at residues 289–309 (LFVM…FLPI), 324–344 (VMLF…GILM), 352–372 (SFQY…TLLD), 385–405 (ILFG…ILAS), 417–437 (TWIF…AAVF), and 496–516 (VWQV…LVKA).

This sequence belongs to the major facilitator superfamily.

The protein resides in the membrane. MFS-type transporter that may have a role in the biosynthesis of acurin A, a highly reduced polyketide coupled to a serine via a peptide bond; either in extra- or intracellular transport. This chain is Acurin A biosynthesis cluster MFS-type transporter, found in Aspergillus aculeatus (strain ATCC 16872 / CBS 172.66 / WB 5094).